Reading from the N-terminus, the 319-residue chain is Ribonuclease Z (319 aa).

Histidine 62, histidine 64, aspartate 66, histidine 67, histidine 145, aspartate 216, and histidine 274 together coordinate Zn(2+). Residue aspartate 66 is the Proton acceptor of the active site.

Belongs to the RNase Z family. As to quaternary structure, homodimer. The cofactor is Zn(2+).

The enzyme catalyses Endonucleolytic cleavage of RNA, removing extra 3' nucleotides from tRNA precursor, generating 3' termini of tRNAs. A 3'-hydroxy group is left at the tRNA terminus and a 5'-phosphoryl group is left at the trailer molecule.. In terms of biological role, zinc phosphodiesterase, which displays some tRNA 3'-processing endonuclease activity. Probably involved in tRNA maturation, by removing a 3'-trailer from precursor tRNA. This is Ribonuclease Z from Synechococcus sp. (strain CC9902).